We begin with the raw amino-acid sequence, 400 residues long: Formate-dependent phosphoribosylglycinamide formyltransferase (400 aa).

N(1)-(5-phospho-beta-D-ribosyl)glycinamide is bound by residues 22–23 (EL) and Glu-82. ATP contacts are provided by residues Arg-115, Lys-156, 161–166 (SSGKGQ), 196–199 (EGFI), and Glu-204. The 190-residue stretch at 120-309 (RLAAETLGLP…EFALHARAIL (190 aa)) folds into the ATP-grasp domain. Positions 268 and 280 each coordinate Mg(2+). N(1)-(5-phospho-beta-D-ribosyl)glycinamide is bound by residues Asp-287, Lys-361, and 368–369 (RR).

The protein belongs to the PurK/PurT family. Homodimer.

The enzyme catalyses N(1)-(5-phospho-beta-D-ribosyl)glycinamide + formate + ATP = N(2)-formyl-N(1)-(5-phospho-beta-D-ribosyl)glycinamide + ADP + phosphate + H(+). The protein operates within purine metabolism; IMP biosynthesis via de novo pathway; N(2)-formyl-N(1)-(5-phospho-D-ribosyl)glycinamide from N(1)-(5-phospho-D-ribosyl)glycinamide (formate route): step 1/1. Functionally, involved in the de novo purine biosynthesis. Catalyzes the transfer of formate to 5-phospho-ribosyl-glycinamide (GAR), producing 5-phospho-ribosyl-N-formylglycinamide (FGAR). Formate is provided by PurU via hydrolysis of 10-formyl-tetrahydrofolate. The sequence is that of Formate-dependent phosphoribosylglycinamide formyltransferase from Xanthomonas oryzae pv. oryzae (strain KACC10331 / KXO85).